Consider the following 938-residue polypeptide: Isoleucine--tRNA ligase (938 aa).

The 'HIGH' region motif lies at 58 to 68 (PYANGSIHIGH). Position 561 (glutamate 561) interacts with L-isoleucyl-5'-AMP. The 'KMSKS' region signature appears at 602-606 (KMSKS). Lysine 605 is an ATP binding site. Residues cysteine 901, cysteine 904, cysteine 921, and cysteine 924 each contribute to the Zn(2+) site.

The protein belongs to the class-I aminoacyl-tRNA synthetase family. IleS type 1 subfamily. In terms of assembly, monomer. The cofactor is Zn(2+).

The protein resides in the cytoplasm. The catalysed reaction is tRNA(Ile) + L-isoleucine + ATP = L-isoleucyl-tRNA(Ile) + AMP + diphosphate. In terms of biological role, catalyzes the attachment of isoleucine to tRNA(Ile). As IleRS can inadvertently accommodate and process structurally similar amino acids such as valine, to avoid such errors it has two additional distinct tRNA(Ile)-dependent editing activities. One activity is designated as 'pretransfer' editing and involves the hydrolysis of activated Val-AMP. The other activity is designated 'posttransfer' editing and involves deacylation of mischarged Val-tRNA(Ile). The sequence is that of Isoleucine--tRNA ligase from Sodalis glossinidius (strain morsitans).